Consider the following 409-residue polypeptide: uncharacterized protein (409 aa).

10 helical membrane passes run 53-73 (IITL…YVHC), 83-103 (WCYF…NVDG), 115-135 (LGEL…AIVM), 141-161 (IGPY…YLAH), 183-203 (VLFM…WTYG), 205-225 (STTV…VTCL), 243-263 (CLLQ…WASV), 265-285 (NLIT…FGYI), 299-319 (CSLF…SILA), and 329-349 (TVAL…FSYF). Positions 388-401 (EEGSSSIGNSTDDI) are enriched in polar residues. The tract at residues 388 to 409 (EEGSSSIGNSTDDINPSEIEEI) is disordered.

The protein belongs to the CDP-alcohol phosphatidyltransferase class-I family.

The protein localises to the membrane. This is an uncharacterized protein from Dictyostelium discoideum (Social amoeba).